The sequence spans 202 residues: Nucleoside triphosphate pyrophosphatase (202 aa).

The active-site Proton acceptor is the aspartate 79.

This sequence belongs to the Maf family. It depends on a divalent metal cation as a cofactor.

Its subcellular location is the cytoplasm. It catalyses the reaction a ribonucleoside 5'-triphosphate + H2O = a ribonucleoside 5'-phosphate + diphosphate + H(+). The catalysed reaction is a 2'-deoxyribonucleoside 5'-triphosphate + H2O = a 2'-deoxyribonucleoside 5'-phosphate + diphosphate + H(+). In terms of biological role, nucleoside triphosphate pyrophosphatase. May have a dual role in cell division arrest and in preventing the incorporation of modified nucleotides into cellular nucleic acids. This chain is Nucleoside triphosphate pyrophosphatase, found in Rhodopseudomonas palustris (strain BisB5).